A 494-amino-acid polypeptide reads, in one-letter code: Cytochrome P450 monooxygenase acrF (494 aa).

Residue cysteine 420 coordinates heme.

The protein belongs to the cytochrome P450 family. Heme is required as a cofactor.

It participates in secondary metabolite biosynthesis. Its function is as follows. Cytochrome P450 monooxygenase; part of the cluster that mediates the biosynthesis of acurin A, a highly reduced polyketide coupled to a serine via a peptide bond. The activities of the highly reducing polyketide synthase acrA and the nonribosomal peptide synthetase acrB are collectively responsible for the synthesis of the acurin A core structure with a heptaketide backbone produced by acrA covalently fused to a L-serine by acrB. After the formation of the PK-NRP hybrid product, it is detached from acrB by reductive release to set up the formation of the lactam ring by aldol condensation. The hydrolyase acrC then catalyzes water loss to generate a double bond in the ring. This double bond is probably reduced, which is followed by three oxidations at C-22 to generate the carboxylic acid moiety, involving probably the FAD-binding monooxygenase acrE and the cytochrome P450 monooxygenases acrD and acrF. Finally, a last methylation step performed by the O-methyltransferase acrG leads to the production of acurin A. This is Cytochrome P450 monooxygenase acrF from Aspergillus aculeatus (strain ATCC 16872 / CBS 172.66 / WB 5094).